The primary structure comprises 362 residues: S-adenosylmethionine:tRNA ribosyltransferase-isomerase (362 aa).

This sequence belongs to the QueA family. In terms of assembly, monomer.

The protein resides in the cytoplasm. The catalysed reaction is 7-aminomethyl-7-carbaguanosine(34) in tRNA + S-adenosyl-L-methionine = epoxyqueuosine(34) in tRNA + adenine + L-methionine + 2 H(+). It functions in the pathway tRNA modification; tRNA-queuosine biosynthesis. Functionally, transfers and isomerizes the ribose moiety from AdoMet to the 7-aminomethyl group of 7-deazaguanine (preQ1-tRNA) to give epoxyqueuosine (oQ-tRNA). In Methylobacterium sp. (strain 4-46), this protein is S-adenosylmethionine:tRNA ribosyltransferase-isomerase.